A 66-amino-acid polypeptide reads, in one-letter code: Truncated interferon antagonist OPG039 (66 aa).

One copy of the ANK repeat lies at H29–L58.

It belongs to the orthopoxvirus OPG039 family.

In Homo sapiens (Human), this protein is Truncated interferon antagonist OPG039 (OPG040).